Consider the following 142-residue polypeptide: Peptide methionine sulfoxide reductase MsrB (142 aa).

The region spanning 2–125 (LKKDKSELTD…NSAAIQFIPY (124 aa)) is the MsrB domain. Catalysis depends on Cys-114, which acts as the Nucleophile.

The protein belongs to the MsrB Met sulfoxide reductase family.

It catalyses the reaction L-methionyl-[protein] + [thioredoxin]-disulfide + H2O = L-methionyl-(R)-S-oxide-[protein] + [thioredoxin]-dithiol. This Staphylococcus aureus (strain bovine RF122 / ET3-1) protein is Peptide methionine sulfoxide reductase MsrB.